We begin with the raw amino-acid sequence, 639 residues long: Exocyst complex component EXO70E2 (639 aa).

It belongs to the EXO70 family. As to quaternary structure, component of the exocyst complex and of the exocyst-positive organelle (EXPO). Interacts with SEC6, SEC10A and SEC10B. Expressed in roots, in the root-hair zone, both in root hair and nonhair cells.

It is found in the secreted. The protein localises to the extracellular exosome. The protein resides in the cell membrane. Its subcellular location is the cytoplasm. It localises to the endomembrane system. Its function is as follows. Influences the subcellular localization patterns of other exocyst complex proteins (e.g. SEC5A, SEC15A, SEC15B and EXO84B) leading to their recruitment to exocyst, well-defined large punctate structures throughout the cytosol. Essential component for the formation and the recruitment of exocyst subunits to the exocyst-positive organelle (EXPO), a secreted double membrane structure also called extracellular exosome, that acts as a sequester for cytosolic proteins to release them into the apoplast. This Arabidopsis thaliana (Mouse-ear cress) protein is Exocyst complex component EXO70E2.